A 352-amino-acid polypeptide reads, in one-letter code: Protein Wnt-2 (352 aa).

A signal peptide spans 1 to 23 (MWKIHNKLLIYILWIMEIRLVSS). Cystine bridges form between Cys65–Cys76, Cys115–Cys123, Cys125–Cys148, Cys196–Cys210, Cys198–Cys205, Cys281–Cys312, Cys297–Cys307, Cys311–Cys351, Cys327–Cys342, Cys329–Cys339, and Cys334–Cys335. 2 N-linked (GlcNAc...) asparagine glycosylation sites follow: Asn75 and Asn119. Ser202 is lipidated: O-palmitoleoyl serine; by PORCN.

The protein belongs to the Wnt family. In terms of processing, palmitoleoylated by porcupine. The lipid group functions as a sorting signal, targeting the ligand to polarized vesicles that transport Wnt2 to unique sites at the cell surface. Depalmitoleoylated by notum, leading to inhibit Wnt signaling pathway. As to expression, dynamic expression pattern during embryogenesis. Expression is predominantly segmented, with expression also seen in the limb primordia and presumptive gonads. In embryonic tracheal cells, expression is close to and dorsal to the tracheal placode.

Its subcellular location is the secreted. It is found in the extracellular space. It localises to the extracellular matrix. Binds as a ligand to a family of frizzled seven-transmembrane receptors and acts through a cascade of genes on the nucleus. Segment polarity protein. May function in gonadogenesis and limb development. Wg and Wnt2 have a role in the developing trachea and together are responsible for all dorsal trunk formation. The chain is Protein Wnt-2 (Wnt2) from Drosophila melanogaster (Fruit fly).